We begin with the raw amino-acid sequence, 567 residues long: Hexose transporter HXT9 (567 aa).

The segment covering 1–16 (MSGVNNTSANDLSTTE) has biased composition (polar residues). The interval 1–45 (MSGVNNTSANDLSTTESNSNSVANAPSVKTEHNDSKNSLNLDATE) is disordered. At 1–56 (MSGVNNTSANDLSTTESNSNSVANAPSVKTEHNDSKNSLNLDATEPPIDLPQKPLS) the chain is on the cytoplasmic side. Over residues 17-28 (SNSNSVANAPSV) the composition is skewed to low complexity. Residues 57-77 (AYTTVAILCLMIAFGGFIFGW) form a helical membrane-spanning segment. Residues 78-112 (DTGTISGFVNLSDFIRRFGQKNDKGTYYLSKVRMG) are Extracellular-facing. N-linked (GlcNAc...) asparagine glycosylation is present at Asn87. Residues 113–133 (LIVSIFNIGCAIGGIVLSKVG) traverse the membrane as a helical segment. Residues 134–139 (DIYGRR) lie on the Cytoplasmic side of the membrane. Residues 140–160 (IGLITVTAIYVVGILIQITSI) form a helical membrane-spanning segment. Residues 161–170 (NKWYQYFIGR) are Extracellular-facing. Residues 171 to 191 (IISGLGVGGIAVLSPMLISEV) traverse the membrane as a helical segment. Residues 192–197 (APKQIR) lie on the Cytoplasmic side of the membrane. The helical transmembrane segment at 198–218 (GTLVQLYQLMCTMGIFLGYCT) threads the bilayer. The Extracellular segment spans residues 219-232 (NYGTKNYHNATQWR). An N-linked (GlcNAc...) asparagine glycan is attached at Asn227. Residues 233–253 (VGLGLCFAWTTFMVSGMMFVP) traverse the membrane as a helical segment. The Cytoplasmic segment spans residues 254-336 (ESPRYLIEVG…IQSLQQLTGD (83 aa)). Residues 337–353 (NYFFYYGTTIFKSVGLK) traverse the membrane as a helical segment. At 354 to 359 (DSFQTS) the chain is on the extracellular side. A helical transmembrane segment spans residues 360-377 (IIIGVVNFFSSFIAVYTI). At 378-384 (ERFGRRT) the chain is on the cytoplasmic side. Residues 385-405 (CLLWGAASMLCCFAVFASVGV) traverse the membrane as a helical segment. Residues 406 to 429 (TKLWPQGSSHQDITSQGAGNCMIV) lie on the Extracellular side of the membrane. Residues 430-450 (FTMFFIFSFATTWAGGCYVIV) form a helical membrane-spanning segment. The Cytoplasmic segment spans residues 451-467 (SETFPLRVKSRGMAIAT). The chain crosses the membrane as a helical span at residues 468 to 488 (AANWMWGFLISFFTPFITGAI). Position 489 (Asn489) is a topological domain, extracellular. A helical membrane pass occupies residues 490-510 (FYYGYVFLGCLVFAYFYVFFF). The Cytoplasmic segment spans residues 511–567 (VPETKGLTLEEVNTMWLEGVPAWKSASWVPPERRTADYDADAIDHDDRPIYKRFFSS).

This sequence belongs to the major facilitator superfamily. Sugar transporter (TC 2.A.1.1) family.

The protein resides in the membrane. Probable glucose transporter. This is Hexose transporter HXT9 (HXT9) from Saccharomyces cerevisiae (strain ATCC 204508 / S288c) (Baker's yeast).